The sequence spans 390 residues: Ribosomal RNA small subunit methyltransferase H (390 aa).

S-adenosyl-L-methionine is bound by residues 47 to 49 (GGH), aspartate 66, phenylalanine 93, aspartate 122, and glutamine 129. Residues 282 to 390 (SKTPPGLPID…SHREDVEGEQ (109 aa)) form a disordered region. Basic and acidic residues predominate over residues 305-316 (GSEKADEQENNK). Residues 348 to 358 (SGSSTTYSARS) are compositionally biased toward polar residues. Composition is skewed to basic and acidic residues over residues 360 to 372 (SRHEAHREGREHL) and 381 to 390 (SHREDVEGEQ).

Belongs to the methyltransferase superfamily. RsmH family.

The protein localises to the cytoplasm. The enzyme catalyses cytidine(1402) in 16S rRNA + S-adenosyl-L-methionine = N(4)-methylcytidine(1402) in 16S rRNA + S-adenosyl-L-homocysteine + H(+). In terms of biological role, specifically methylates the N4 position of cytidine in position 1402 (C1402) of 16S rRNA. This is Ribosomal RNA small subunit methyltransferase H from Corynebacterium kroppenstedtii (strain DSM 44385 / JCM 11950 / CIP 105744 / CCUG 35717).